A 449-amino-acid chain; its full sequence is CCAAT/enhancer-binding protein (449 aa).

Disordered regions lie at residues 211-233 (HATY…TIKE), 276-302 (GNPL…NGSQ), and 334-386 (SKLH…KAKV). 3 stretches are compositionally biased toward low complexity: residues 215–229 (NNSS…SDSS), 280–301 (NGGN…SNGS), and 339–349 (QQQHQQHQQQQ). The span at 357-368 (KHVDKGTDEYRR) shows a compositional bias: basic and acidic residues. Residues 363-426 (TDEYRRRRER…QLHKQIYMQL (64 aa)) form the bZIP domain. Residues 367–396 (RRRRERNNIAVRKSREKAKVRSREVEERVK) are basic motif. A leucine-zipper region spans residues 398-405 (LLKEKDAL).

It belongs to the bZIP family. C/EBP subfamily. Binds DNA as a dimer and can form stable heterodimers. Interacts with trbl. Post-translationally, ubiquitination/deubiquitination regulates border cell migration. Ubiquitination is stimulated by trbl, which leads to proteasomal degradation and inhibits border cell migration. Deubiquitination by Usp47, leads to its stabilization and promotes border cell migration.

The protein localises to the nucleus. Its function is as follows. Required for the expression of gene products mediating border cell migration. Among the DNA sequences that this protein binds with high affinity is a conserved site within the promoter of its gene. This Drosophila melanogaster (Fruit fly) protein is CCAAT/enhancer-binding protein (slbo).